A 103-amino-acid chain; its full sequence is Large ribosomal subunit protein bL21 (103 aa).

It belongs to the bacterial ribosomal protein bL21 family. As to quaternary structure, part of the 50S ribosomal subunit. Contacts protein L20.

Its function is as follows. This protein binds to 23S rRNA in the presence of protein L20. In Shewanella putrefaciens (strain CN-32 / ATCC BAA-453), this protein is Large ribosomal subunit protein bL21.